The following is a 428-amino-acid chain: Methyl-branched lipid omega-hydroxylase (428 aa).

A heme-binding site is contributed by Cys-379.

It belongs to the cytochrome P450 family. Heme serves as cofactor.

It catalyses the reaction a methyl-branched lipid + O2 + 2 reduced ferredoxin [iron-sulfur] cluster + 2 H(+) = an omega-hydroxy-methyl-branched lipid + H2O + 2 oxidized ferredoxin [iron-sulfur] cluster.. The enzyme catalyses cholest-4-en-3-one + 6 reduced [2Fe-2S]-[ferredoxin] + 3 O2 + 5 H(+) = (25R)-3-oxocholest-4-en-26-oate + 6 oxidized [2Fe-2S]-[ferredoxin] + 4 H2O. It participates in lipid metabolism; branched-chain fatty acid metabolism. Primarily hydroxylates the omega-carbon of a number of methyl-branched lipids, including (2E,6E)-farnesol, phytanate, geranylgeraniol, 15-methylpalmitate and (2E,6E)-farnesyl diphosphate. Also catalyzes the sequential oxidation of the terminal methyl of cholest-4-en-3-one into (25R)-26-hydroxycholest-4-en-3-one (alcohol), (25R)-26-oxocholest-4-en-3-one (aldehyde), to finally yield the carboxylic acid (25R)-3-oxocholest-4-en-26-oate. Also able to sequentially oxidize cholesterol itself, not only cholest-4-en-3-one. The chain is Methyl-branched lipid omega-hydroxylase (cyp124) from Mycobacterium bovis (strain ATCC BAA-935 / AF2122/97).